A 674-amino-acid polypeptide reads, in one-letter code: Pre-mRNA-splicing factor cwf4 (674 aa).

HAT repeat units lie at residues 50 to 82, 84 to 116, 118 to 150, 152 to 183, 185 to 216, 218 to 253, 255 to 289, 299 to 331, 333 to 367, 377 to 413, 415 to 446, 448 to 480, 482 to 516, 518 to 549, 567 to 608, and 610 to 643; these read EFQGRKRKEFEDAIRRNRLAMGHWMRYGQWELD, KEFARARSVFERALDVDSTYIPLWLKYIECEMK, RNINHARNLFDRAVTQLPRVDKLWYKYVYMEEM, GNITGCRQVFERWLKWEPDENCWMSYIRMERR, HENERARGIYERFVVVHPEVTNWLRWARFEEE, GNAANVRQVYLAAIDALGQEFLNERFFIAFAKFEIR, KEYERARTIFKYAIDFMPRSKSMELYKEYTHFEKQ, TVLDKRRLQYEKLLKDSPYDYDTWLDLLKLEES, GDINTIRETYEKAIAKVPEVVEKNAWRRYVYIWLN, KDVDRARKVYQEALKLIPHKKFTFAKLWLMYAMFELR, RKIDVARKTLGRALGMCPKPKLFRGYIEFEDA, KQFDRCRILYEKWILYDPEACAPWLGYAALETK, GDSDRARALYNLAVNQPILETPELVWKAYIDFEFE, MEYGKARSIYQQLLRTAPHVKVWISFANFEIA, TAVV…MHGT, and DTRKHVSSLMPQVVKKRRRLEDGSFEEYLDYLFP.

Belongs to the crooked-neck family. Belongs to the 40S cdc5-associated complex (or cwf complex), a spliceosome sub-complex reminiscent of a late-stage spliceosome composed of the U2, U5 and U6 snRNAs and at least brr2, cdc5, cwf2/prp3, cwf3/syf1, cwf4/syf3, cwf5/ecm2, spp42/cwf6, cwf7/spf27, cwf8, cwf9, cwf10, cwf11, cwf12, prp45/cwf13, cwf14, cwf15, cwf16, cwf17, cwf18, cwf19, cwf20, cwf21, cwf22, cwf23, cwf24, cwf25, cwf26, cyp7/cwf27, cwf28, cwf29/ist3, lea1, msl1, prp5/cwf1, prp10, prp12/sap130, prp17, prp22, sap61, sap62, sap114, sap145, slu7, smb1, smd1, smd3, smf1, smg1 and syf2.

The protein localises to the nucleus. In terms of biological role, involved in pre-mRNA splicing and cell cycle progression. Required for the spliceosome assembly and initiation of the DNA replication. The polypeptide is Pre-mRNA-splicing factor cwf4 (cwf4) (Schizosaccharomyces pombe (strain 972 / ATCC 24843) (Fission yeast)).